Here is an 895-residue protein sequence, read N- to C-terminus: uncharacterized protein (895 aa).

The disordered stretch occupies residues K257–S283. A compositionally biased stretch (low complexity) spans N268–S283.

This is an uncharacterized protein from Acanthamoeba polyphaga mimivirus (APMV).